The following is a 478-amino-acid chain: MPVPSQPLPLHLDPLDPLLSTYHFVGIGGVGMSALAYILAKQGFRVSGSDIVANGRTRRLEALGVRFFQGHSSEGLVGDPQVVYSSAIRPTNPELAAALGKGLTVWHRADLLAALFNRRSGIGVAGTHGKTTTSSMIGYVLLSAGWDPTLIIGGEVDAWDGNARLGKGEYWVAEVDESDGSLVRLYPKIGVITNIELDHPDHYADLGQVIRAFQQYGQQSQTLVACLDCPNVAAHLRVDVGYSLTGHPQAQYQARQILYTASFTCAEIWEKGSLLGQLRLQVLGSHNLSNALAAVAVGRQLGLEFAVIASALAQFRGAHRRFEHKGEVGGVTFIDDYAHHPSEIRATLQAARLQQRRVVAVFQPHRHSRLAALFQDFARCFGEADVVVIVPTYGAGEPAPEGSDSLRLAVAVAEHHPHVRYVSSLPQLPEVLPSVLQPGDLAVFLGAGDLNQQIIATMRAYAAQVREQPGQAKNPNFS.

ATP is bound at residue Gly-126–Thr-132.

It belongs to the MurCDEF family.

The protein localises to the cytoplasm. The catalysed reaction is UDP-N-acetyl-alpha-D-muramate + L-alanine + ATP = UDP-N-acetyl-alpha-D-muramoyl-L-alanine + ADP + phosphate + H(+). Its pathway is cell wall biogenesis; peptidoglycan biosynthesis. In terms of biological role, cell wall formation. In Synechococcus sp. (strain JA-2-3B'a(2-13)) (Cyanobacteria bacterium Yellowstone B-Prime), this protein is UDP-N-acetylmuramate--L-alanine ligase.